A 143-amino-acid polypeptide reads, in one-letter code: Gastrin-releasing peptide (143 aa).

Positions 1–23 (MRGPELRLVLLALVLCQAPLGPA) are cleaved as a signal peptide. Met50 bears the Methionine amide mark. The propeptide occupies 54–143 (STGESRHVLE…GLKAKEGALS (90 aa)). The segment at 91–115 (KGNSSHRSPQLKPLSTHQPTLDTED) is disordered. Positions 92 to 111 (GNSSHRSPQLKPLSTHQPTL) are enriched in polar residues.

This sequence belongs to the bombesin/neuromedin-B/ranatensin family.

It localises to the secreted. It is found in the cytoplasmic vesicle. The protein localises to the secretory vesicle lumen. The protein resides in the cell projection. Its subcellular location is the neuron projection. In terms of biological role, stimulates the release of gastrin and other gastrointestinal hormones. Contributes to the perception of prurient stimuli and to the transmission of itch signals in the spinal cord that promote scratching behavior. Contributes primarily to nonhistaminergic itch sensation. In one study, shown to act in the amygdala as part of an inhibitory network which inhibits memory specifically related to learned fear. In another study, shown to act on vasoactive intestinal peptide (VIP)-expressing cells in the auditory cortex, most likely via extrasynaptic diffusion from local and long-range sources, to mediate disinhibition of glutamatergic cells via VIP cell-specific GRPR signaling which leads to enhanced auditory fear memories. Contributes to the regulation of food intake. Inhibits voltage-gated sodium channels but enhances voltage-gated potassium channels in hippocampal neurons. Induces sighing by acting directly on the pre-Botzinger complex, a cluster of several thousand neurons in the ventrolateral medulla responsible for inspiration during respiratory activity. Functionally, induces an itch response through activation of receptors present on mast cells, triggering mast cell degranulation. This is Gastrin-releasing peptide (GRP) from Cavia porcellus (Guinea pig).